We begin with the raw amino-acid sequence, 88 residues long: MATRIRLRRMGAKKSPFYRLVVADSRYPRDGRFIEELGYYNPSTTPATVKIDEEKALKWLASGAKPSDTARSLLQKQGIMARFAEIRK.

It belongs to the bacterial ribosomal protein bS16 family.

The protein is Small ribosomal subunit protein bS16 of Syntrophomonas wolfei subsp. wolfei (strain DSM 2245B / Goettingen).